We begin with the raw amino-acid sequence, 64 residues long: Small, acid-soluble spore protein beta (64 aa).

This sequence belongs to the alpha/beta-type SASP family.

Functionally, SASP are bound to spore DNA. They are double-stranded DNA-binding proteins that cause DNA to change to an a-like conformation. They protect the DNA backbone from chemical and enzymatic cleavage and are thus involved in dormant spore's high resistance to UV light. The polypeptide is Small, acid-soluble spore protein beta (Paraclostridium bifermentans (Clostridium bifermentans)).